A 221-amino-acid chain; its full sequence is ATP phosphoribosyltransferase (221 aa).

It belongs to the ATP phosphoribosyltransferase family. Short subfamily. Heteromultimer composed of HisG and HisZ subunits.

It localises to the cytoplasm. The catalysed reaction is 1-(5-phospho-beta-D-ribosyl)-ATP + diphosphate = 5-phospho-alpha-D-ribose 1-diphosphate + ATP. Its pathway is amino-acid biosynthesis; L-histidine biosynthesis; L-histidine from 5-phospho-alpha-D-ribose 1-diphosphate: step 1/9. In terms of biological role, catalyzes the condensation of ATP and 5-phosphoribose 1-diphosphate to form N'-(5'-phosphoribosyl)-ATP (PR-ATP). Has a crucial role in the pathway because the rate of histidine biosynthesis seems to be controlled primarily by regulation of HisG enzymatic activity. This Symbiobacterium thermophilum (strain DSM 24528 / JCM 14929 / IAM 14863 / T) protein is ATP phosphoribosyltransferase.